We begin with the raw amino-acid sequence, 125 residues long: Small ribosomal subunit protein uS12 (125 aa).

Residues 1 to 30 (MPTISQLVRKPRAAKPLKSKVPALGNSPQK) are disordered. Residues 9 to 18 (RKPRAAKPLK) are compositionally biased toward basic residues. Aspartate 89 is modified (3-methylthioaspartic acid). The tract at residues 103-125 (DTAGVKDRKQGRSKYGAKKPKSA) is disordered. The segment covering 113–125 (GRSKYGAKKPKSA) has biased composition (basic residues).

It belongs to the universal ribosomal protein uS12 family. As to quaternary structure, part of the 30S ribosomal subunit. Contacts proteins S8 and S17. May interact with IF1 in the 30S initiation complex.

In terms of biological role, with S4 and S5 plays an important role in translational accuracy. Functionally, interacts with and stabilizes bases of the 16S rRNA that are involved in tRNA selection in the A site and with the mRNA backbone. Located at the interface of the 30S and 50S subunits, it traverses the body of the 30S subunit contacting proteins on the other side and probably holding the rRNA structure together. The combined cluster of proteins S8, S12 and S17 appears to hold together the shoulder and platform of the 30S subunit. The polypeptide is Small ribosomal subunit protein uS12 (Nitrosospira multiformis (strain ATCC 25196 / NCIMB 11849 / C 71)).